A 405-amino-acid chain; its full sequence is Threonine synthase (405 aa).

K104 carries the post-translational modification N6-(pyridoxal phosphate)lysine. Pyridoxal 5'-phosphate contacts are provided by residues N130, 231-235 (GNAGN), and T369.

The protein belongs to the threonine synthase family. In terms of assembly, homotrimer. Pyridoxal 5'-phosphate serves as cofactor.

The enzyme catalyses O-phospho-L-homoserine + H2O = L-threonine + phosphate. Its pathway is amino-acid biosynthesis; L-threonine biosynthesis; L-threonine from L-aspartate: step 5/5. Its function is as follows. Catalyzes the gamma-elimination of phosphate from L-phosphohomoserine and the beta-addition of water to produce L-threonine. Does not catalyze the conversion of O-acetyl-L-homoserine into threonine. This Methanosarcina acetivorans (strain ATCC 35395 / DSM 2834 / JCM 12185 / C2A) protein is Threonine synthase (thrC).